We begin with the raw amino-acid sequence, 188 residues long: Ribonuclease HII (188 aa).

The RNase H type-2 domain maps to 6 to 188 (KPLCGIDEAG…VKGLDEPTLF (183 aa)). Positions 12, 13, and 99 each coordinate a divalent metal cation.

It belongs to the RNase HII family. It depends on Mn(2+) as a cofactor. Mg(2+) serves as cofactor.

The protein resides in the cytoplasm. The enzyme catalyses Endonucleolytic cleavage to 5'-phosphomonoester.. Its function is as follows. Endonuclease that specifically degrades the RNA of RNA-DNA hybrids. In Sulfurovum sp. (strain NBC37-1), this protein is Ribonuclease HII.